A 300-amino-acid chain; its full sequence is Porphobilinogen deaminase (300 aa).

The residue at position 242 (Cys242) is an S-(dipyrrolylmethanemethyl)cysteine.

This sequence belongs to the HMBS family. As to quaternary structure, monomer. Dipyrromethane is required as a cofactor.

It catalyses the reaction 4 porphobilinogen + H2O = hydroxymethylbilane + 4 NH4(+). It functions in the pathway porphyrin-containing compound metabolism; protoporphyrin-IX biosynthesis; coproporphyrinogen-III from 5-aminolevulinate: step 2/4. Functionally, tetrapolymerization of the monopyrrole PBG into the hydroxymethylbilane pre-uroporphyrinogen in several discrete steps. The polypeptide is Porphobilinogen deaminase (Rickettsia bellii (strain OSU 85-389)).